Reading from the N-terminus, the 138-residue chain is ATP synthase epsilon chain (138 aa).

Belongs to the ATPase epsilon chain family. F-type ATPases have 2 components, CF(1) - the catalytic core - and CF(0) - the membrane proton channel. CF(1) has five subunits: alpha(3), beta(3), gamma(1), delta(1), epsilon(1). CF(0) has three main subunits: a, b and c.

The protein resides in the cell membrane. Produces ATP from ADP in the presence of a proton gradient across the membrane. The protein is ATP synthase epsilon chain of Caldanaerobacter subterraneus subsp. tengcongensis (strain DSM 15242 / JCM 11007 / NBRC 100824 / MB4) (Thermoanaerobacter tengcongensis).